The following is a 160-amino-acid chain: Myosin catalytic light chain LC-1, mantle muscle (160 aa).

X1 carries the blocked amino end (Xaa) modification. EF-hand domains are found at residues 7 to 44 (DEIE…LGMN), 83 to 118 (TAAD…LGER), and 119 to 153 (ITED…VMAG).

Its function is as follows. In molluscan muscle, calcium regulation is associated with myosin rather than with actin. Muscle myosin contains two types of light chains: the catalytic light chain, essential for ATPase activity, and the regulatory light chain, a calcium-binding protein responsible for Ca(2+) dependent binding and Ca(2+) dependent Mg-ATPase activity. The polypeptide is Myosin catalytic light chain LC-1, mantle muscle (Todarodes pacificus (Japanese flying squid)).